Consider the following 88-residue polypeptide: Protein LE25 (88 aa).

Residues 1–88 (MQTGKDAASA…YGATGNHTTF (88 aa)) form a disordered region. The span at 14–65 (GMEKTKANVQEKAERMTTRDPLKKEMATEKKEDRVAAAEMGKRDAKAQHAAE) shows a compositional bias: basic and acidic residues.

This sequence belongs to the LEA type 1 family. In terms of tissue distribution, accumulates in developing seeds and drought-stressed leaves.

In Solanum lycopersicum (Tomato), this protein is Protein LE25 (LE25).